Reading from the N-terminus, the 51-residue chain is Defensin-like protein 2A (51 aa).

A Pyrrolidone carboxylic acid modification is found at Gln1. 4 disulfides stabilise this stretch: Cys4–Cys51, Cys15–Cys36, Cys21–Cys45, and Cys25–Cys47. Ser8 carries the post-translational modification Phosphoserine; by CPK.

As to quaternary structure, forms oligomers in its native state.

Possesses antifungal activity sensitive to inorganic cations. The sequence is that of Defensin-like protein 2A from Sinapis alba (White mustard).